Consider the following 230-residue polypeptide: Proteasome subunit alpha (230 aa).

The protein belongs to the peptidase T1A family. As to quaternary structure, the 20S proteasome core is composed of 14 alpha and 14 beta subunits that assemble into four stacked heptameric rings, resulting in a barrel-shaped structure. The two inner rings, each composed of seven catalytic beta subunits, are sandwiched by two outer rings, each composed of seven alpha subunits. The catalytic chamber with the active sites is on the inside of the barrel. Has a gated structure, the ends of the cylinder being occluded by the N-termini of the alpha-subunits. Is capped by the proteasome-associated ATPase, ARC.

The protein localises to the cytoplasm. It participates in protein degradation; proteasomal Pup-dependent pathway. With respect to regulation, the formation of the proteasomal ATPase ARC-20S proteasome complex, likely via the docking of the C-termini of ARC into the intersubunit pockets in the alpha-rings, may trigger opening of the gate for substrate entry. Interconversion between the open-gate and close-gate conformations leads to a dynamic regulation of the 20S proteasome proteolysis activity. Functionally, component of the proteasome core, a large protease complex with broad specificity involved in protein degradation. The chain is Proteasome subunit alpha from Thermomonospora curvata (strain ATCC 19995 / DSM 43183 / JCM 3096 / KCTC 9072 / NBRC 15933 / NCIMB 10081 / Henssen B9).